Here is a 636-residue protein sequence, read N- to C-terminus: Dehydrogenase ARMGADRAFT_1018426 (636 aa).

The signal sequence occupies residues methionine 1–serine 19. FAD contacts are provided by residues threonine 49 to alanine 50 and glutamate 70 to glycine 71. A glycan (N-linked (GlcNAc...) asparagine) is linked at asparagine 99. FAD is bound by residues tryptophan 104 and asparagine 134–threonine 137. The N-linked (GlcNAc...) asparagine glycan is linked to asparagine 253. Residue valine 280 coordinates FAD. N-linked (GlcNAc...) asparagine glycosylation is found at asparagine 333, asparagine 380, asparagine 394, and asparagine 498. The active-site Proton acceptor is histidine 570. Residues alanine 603 and proline 614–serine 615 each bind FAD.

This sequence belongs to the GMC oxidoreductase family. The cofactor is FAD.

The protein operates within secondary metabolite biosynthesis. Its function is as follows. Dehydrogenase, part of the gene cluster that mediates the biosynthesis of melleolides, a range of antifungal and phytotoxic polyketide derivatives composed of an orsellinic acid (OA) moiety esterified to various sesquiterpene alcohols. The first step in melleolides biosynthesis is performed by the delta(6)-protoilludene synthase PRO1 which catalyzes the cyclization of farnesyl diphosphate to protoilludene. The orsellinic acid synthase armB produces OA by condensing acetyl-CoA with 3 malonyl-CoA units in a three-round chain elongation reaction folowed by a C2-C7 ring closure. ArmB further catalyzes the trans-esterification of OA to the various sesquiterpene alcohols resulting from the hydroxylation of protoilludene. The melleolides cluster also includes 5 cytochrome P450 monooxygenases, 4 NAD(+)-dependent oxidoreductases, one flavin-dependent oxidoreductase, and one O-methyltransferase. The cytochrome P450 monooxygenases may be involved in protoilludene hydroxylation to elaborate melleolides with multiple alcohol groups, such as melleolide D, which carries alcohol functionalities at C-4, C-5, C-10, and C-13. The role of the NAD(+)-dependent enzymes remains unknown. Numerous melleolides, including arnamial, show 5'-O-methylation of the aromatic moiety which may be catalyzed by the methyltransferase encoded in the cluster. The flavin-dependent oxidoreductase might represent the dehydrogenase yielding the aldehyde in position 1 of arnamial and other melleolides. Finally, several halogenase localized outside of the cluster, are able to catalyze the transfer of a single chlorine atom to the melleolide backbone, resulting in a 6'-chloromelleolide product. This is Dehydrogenase ARMGADRAFT_1018426 from Armillaria gallica (Bulbous honey fungus).